The chain runs to 233 residues: Large ribosomal subunit protein uL1 (233 aa).

This sequence belongs to the universal ribosomal protein uL1 family. In terms of assembly, part of the 50S ribosomal subunit.

Its function is as follows. Binds directly to 23S rRNA. The L1 stalk is quite mobile in the ribosome, and is involved in E site tRNA release. In terms of biological role, protein L1 is also a translational repressor protein, it controls the translation of the L11 operon by binding to its mRNA. The sequence is that of Large ribosomal subunit protein uL1 from Vibrio vulnificus (strain CMCP6).